A 106-amino-acid chain; its full sequence is Large ribosomal subunit protein uL24 (106 aa).

The protein belongs to the universal ribosomal protein uL24 family. As to quaternary structure, part of the 50S ribosomal subunit.

Its function is as follows. One of two assembly initiator proteins, it binds directly to the 5'-end of the 23S rRNA, where it nucleates assembly of the 50S subunit. One of the proteins that surrounds the polypeptide exit tunnel on the outside of the subunit. In Bordetella avium (strain 197N), this protein is Large ribosomal subunit protein uL24.